We begin with the raw amino-acid sequence, 162 residues long: Disulfide bond formation protein B (162 aa).

Topologically, residues 1–8 are cytoplasmic; that stretch reads MTPLFRKA. Residues 9-25 form a helical membrane-spanning segment; sequence VWLLFAVSVCAFAGSLA. The Periplasmic segment spans residues 26–43; sequence AQYVLGMEPCVLCISQRL. An intrachain disulfide couples Cys35 to Cys38. The chain crosses the membrane as a helical span at residues 44-60; it reads CVLATALCAAVVLACKP. At 61-67 the chain is on the cytoplasmic side; that stretch reads KGRVGGL. Residues 68–85 form a helical membrane-spanning segment; it reads SGAVFISIPAVTGISVAA. Residues 86–141 are Periplasmic-facing; sequence YQLWLQSLPPGAAPSCGAPWTFRLKGWPLFDWFEPVVRGFGNCAEPDYLLGVALPV. Cys101 and Cys128 form a disulfide bridge. The chain crosses the membrane as a helical span at residues 142 to 160; it reads WSAAYFLAVVLTVWWAWAR. At 161–162 the chain is on the cytoplasmic side; that stretch reads AK.

Belongs to the DsbB family.

The protein resides in the cell inner membrane. Functionally, required for disulfide bond formation in some periplasmic proteins. Acts by oxidizing the DsbA protein. The polypeptide is Disulfide bond formation protein B (Neisseria gonorrhoeae (strain ATCC 700825 / FA 1090)).